Reading from the N-terminus, the 412-residue chain is Subtilisin-like protease 6 (412 aa).

An N-terminal signal peptide occupies residues 1–20 (MGFITKAIPIVLAALSTVNG). Residues 21–127 (ARILEAGPHA…VRTTTNGTNL (107 aa)) constitute a propeptide that is removed on maturation. The Inhibitor I9 domain maps to 36–120 (KYIVVMKKDV…FIEPDFVVRT (85 aa)). Residues 135 to 412 (SWGLARVGSK…SKLIYNGSGK (278 aa)) enclose the Peptidase S8 domain. Residues aspartate 167 and histidine 198 each act as charge relay system in the active site. 2 N-linked (GlcNAc...) asparagine glycosylation sites follow: asparagine 252 and asparagine 264. Residue serine 358 is the Charge relay system of the active site. Asparagine 408 carries N-linked (GlcNAc...) asparagine glycosylation.

Belongs to the peptidase S8 family.

It localises to the secreted. Its function is as follows. Secreted subtilisin-like serine protease with keratinolytic activity that contributes to pathogenicity. The polypeptide is Subtilisin-like protease 6 (SUB6) (Arthroderma benhamiae (strain ATCC MYA-4681 / CBS 112371) (Trichophyton mentagrophytes)).